The chain runs to 379 residues: Cobalt-precorrin-5B C(1)-methyltransferase (379 aa).

This sequence belongs to the CbiD family.

It catalyses the reaction Co-precorrin-5B + S-adenosyl-L-methionine = Co-precorrin-6A + S-adenosyl-L-homocysteine. It functions in the pathway cofactor biosynthesis; adenosylcobalamin biosynthesis; cob(II)yrinate a,c-diamide from sirohydrochlorin (anaerobic route): step 6/10. Functionally, catalyzes the methylation of C-1 in cobalt-precorrin-5B to form cobalt-precorrin-6A. This Salmonella schwarzengrund (strain CVM19633) protein is Cobalt-precorrin-5B C(1)-methyltransferase.